The sequence spans 148 residues: Azurin (148 aa).

The signal sequence occupies residues 1 to 18 (MRNQLLFALAFIPTIAAA). In terms of domain architecture, Plastocyanin-like spans 19 to 148 (ASNCEVNVSA…MMRGTVKLVD (130 aa)). Cys-22 and Cys-45 are disulfide-bonded. Cu cation is bound by residues His-65, Cys-131, His-136, and Met-140.

The protein localises to the periplasm. The protein operates within one-carbon metabolism; methylamine degradation. Its function is as follows. Probable electron acceptor for methylamine dehydrogenase. This chain is Azurin (azu), found in Methylobacillus flagellatus (strain ATCC 51484 / DSM 6875 / VKM B-1610 / KT).